Reading from the N-terminus, the 548-residue chain is Beta-lactamase-like protein 2 (548 aa).

Residues 1–24 form the signal peptide; it reads MKIMNKQSITIFLIICFLINLILS. Asparagine 237, asparagine 258, asparagine 443, and asparagine 459 each carry an N-linked (GlcNAc...) asparagine glycan.

It belongs to the beta-lactamase family.

Its subcellular location is the secreted. In Dictyostelium discoideum (Social amoeba), this protein is Beta-lactamase-like protein 2.